Reading from the N-terminus, the 323-residue chain is Dehydrogenase/reductase SDR family member 7B (323 aa).

Over 1–17 (MISPSFRKGMLKERVMD) the chain is Cytoplasmic. Residues 18–38 (LASQTTILPLLFGCLGIFSLF) form a helical; Signal-anchor for type II membrane protein membrane-spanning segment. At 39 to 323 (RLLQRIRSKA…ARKERKSKSS (285 aa)) the chain is on the lumenal side. NAD(+)-binding residues include serine 62 and leucine 64. Residue serine 192 participates in substrate binding. Tyrosine 205, lysine 209, and threonine 240 together coordinate NAD(+). Tyrosine 205 acts as the Proton acceptor in catalysis.

The protein belongs to the short-chain dehydrogenases/reductases (SDR) family.

Its subcellular location is the endoplasmic reticulum membrane. Its function is as follows. Putative oxidoreductase. This chain is Dehydrogenase/reductase SDR family member 7B, found in Mus musculus (Mouse).